We begin with the raw amino-acid sequence, 206 residues long: Small ribosomal subunit protein uS4 (206 aa).

The region spanning 96–156 is the S4 RNA-binding domain; sequence GRLDNVVYRM…EKSKKQARIK (61 aa).

The protein belongs to the universal ribosomal protein uS4 family. Part of the 30S ribosomal subunit. Contacts protein S5. The interaction surface between S4 and S5 is involved in control of translational fidelity.

Functionally, one of the primary rRNA binding proteins, it binds directly to 16S rRNA where it nucleates assembly of the body of the 30S subunit. Its function is as follows. With S5 and S12 plays an important role in translational accuracy. The protein is Small ribosomal subunit protein uS4 of Haemophilus influenzae (strain ATCC 51907 / DSM 11121 / KW20 / Rd).